Consider the following 352-residue polypeptide: Photosystem II D2 protein (352 aa).

Over 1–31 (MTIAIGRAPAERGWFDILDDWLKRDRFVFVG) the chain is Cytoplasmic. The helical transmembrane segment at 32–53 (WSGILLFPCAYLALGGWLTGTT) threads the bilayer. Over 54-108 (FVTSWYTHGLASSYLEGCNFLTVAVSTPANSMGHSLLLLWGPEAQGDFTRWCQLG) the chain is Lumenal. A helical transmembrane segment spans residues 109 to 131 (GLWTFIALHGAFGLIGFMLRQFE). Histidine 117 serves as a coordination point for chlorophyll a. Residue glutamine 129 participates in pheophytin a binding. Residues 132-140 (IARLVGVRP) are Cytoplasmic-facing. Residues 141–160 (YNAIAFSAPIAVFVSVFLIY) form a helical membrane-spanning segment. Asparagine 142 is a pheophytin a binding site. Residues 161 to 193 (PLGQSSWFFAPSFGVAAIFRFLLFFQGFHNWTL) are Lumenal-facing. The chain crosses the membrane as a helical span at residues 194–217 (NPFHMMGVAGVLGGALLCAIHGAT). Position 197 (histidine 197) interacts with chlorophyll a. Residues histidine 214 and phenylalanine 261 each coordinate a plastoquinone. Position 214 (histidine 214) interacts with Fe cation. Residues 218–265 (VENTLFQDGEGASTFRAFNPTQAEETYSMVTANRFWSQIFGIAFSNKR) are Cytoplasmic-facing. A helical membrane pass occupies residues 266-288 (WLHFFMLFVPVTGLWMSAIGVVG). Residue histidine 268 coordinates Fe cation. At 289–352 (LALNLRSYDF…EEVLPRGNAL (64 aa)) the chain is on the lumenal side.

Belongs to the reaction center PufL/M/PsbA/D family. As to quaternary structure, PSII is composed of 1 copy each of membrane proteins PsbA, PsbB, PsbC, PsbD, PsbE, PsbF, PsbH, PsbI, PsbJ, PsbK, PsbL, PsbM, PsbT, PsbX, PsbY, PsbZ, Psb30/Ycf12, peripheral proteins PsbO, CyanoQ (PsbQ), PsbU, PsbV and a large number of cofactors. It forms dimeric complexes. Part of a photosystem II (PSII) assembly intermediate complex PSII-I; crystallized from a strain deleted of psbJ, it forms monomeric PSII before addition of the oxygen evolving complex. PSII-I includes 3 assembly factors not found in mature PSII (Psb27, Psb28 and Psb34). The D1/D2 heterodimer binds P680, chlorophylls that are the primary electron donor of PSII, and subsequent electron acceptors. It shares a non-heme iron and each subunit binds pheophytin, quinone, additional chlorophylls, carotenoids and lipids. There is also a Cl(-1) ion associated with D1 and D2, which is required for oxygen evolution. PSII binds additional chlorophylls, carotenoids and specific lipids. serves as cofactor.

It localises to the cellular thylakoid membrane. The enzyme catalyses 2 a plastoquinone + 4 hnu + 2 H2O = 2 a plastoquinol + O2. Functionally, photosystem II (PSII) is a light-driven water:plastoquinone oxidoreductase that uses light energy to abstract electrons from H(2)O, generating O(2) and a proton gradient subsequently used for ATP formation. It consists of a core antenna complex that captures photons, and an electron transfer chain that converts photonic excitation into a charge separation. The D1/D2 (PsbA/PsbD) reaction center heterodimer binds P680, the primary electron donor of PSII as well as several subsequent electron acceptors. D2 is needed for assembly of a stable PSII complex. The polypeptide is Photosystem II D2 protein (Thermosynechococcus vestitus (strain NIES-2133 / IAM M-273 / BP-1)).